Reading from the N-terminus, the 412-residue chain is Serine hydroxymethyltransferase (412 aa).

(6S)-5,6,7,8-tetrahydrofolate contacts are provided by residues L119 and 123–125 (GHL). The residue at position 228 (K228) is an N6-(pyridoxal phosphate)lysine.

It belongs to the SHMT family. As to quaternary structure, homodimer. Requires pyridoxal 5'-phosphate as cofactor.

The protein localises to the cytoplasm. It carries out the reaction (6R)-5,10-methylene-5,6,7,8-tetrahydrofolate + glycine + H2O = (6S)-5,6,7,8-tetrahydrofolate + L-serine. Its pathway is one-carbon metabolism; tetrahydrofolate interconversion. The protein operates within amino-acid biosynthesis; glycine biosynthesis; glycine from L-serine: step 1/1. Functionally, catalyzes the reversible interconversion of serine and glycine with tetrahydrofolate (THF) serving as the one-carbon carrier. This reaction serves as the major source of one-carbon groups required for the biosynthesis of purines, thymidylate, methionine, and other important biomolecules. Also exhibits THF-independent aldolase activity toward beta-hydroxyamino acids, producing glycine and aldehydes, via a retro-aldol mechanism. This is Serine hydroxymethyltransferase from Thermodesulfovibrio yellowstonii (strain ATCC 51303 / DSM 11347 / YP87).